Reading from the N-terminus, the 742-residue chain is Protein-associating with the carboxyl-terminal domain of ezrin (742 aa).

A lipid anchor (N-myristoyl glycine) is attached at glycine 2. Residues 2 to 245 form the Protein kinase domain; the sequence is GSENSALKSY…LCTLLSHDFF (244 aa). HEAT repeat units lie at residues 199–238, 285–323, 333–370, and 372–409; these read ESLL…ALCT, LIAS…HAQG, LFQS…HFTQ, and QLKK…LLGP. Serine 439 bears the Phosphoserine mark. 3 disordered regions span residues 506-544, 568-598, and 629-652; these read LSDV…QTVN, SSWD…TSGE, and GDDA…VPSE. Acidic residues predominate over residues 529-539; that stretch reads WPDWSEPEEPE. Positions 548 to 742 are interaction with EZR; that stretch reads WPREPCDDVK…GELNWEDNNW (195 aa). Serine 707 is modified (phosphoserine). A disordered region spans residues 723 to 742; sequence EGEAEGWEEEGELNWEDNNW.

The protein belongs to the protein kinase superfamily. In terms of assembly, interacts with EZR/VIL2 C-terminal domain. Post-translationally, may be myristoylated; myristoylation may target it to Golgi compartment. In terms of processing, phosphorylated. In terms of tissue distribution, ubiquitously expressed.

The protein resides in the cytoplasm. The protein localises to the golgi apparatus. It is found in the cell projection. It localises to the lamellipodium. May play a role in regulating cell adhesion/migration complexes in migrating cells. This Homo sapiens (Human) protein is Protein-associating with the carboxyl-terminal domain of ezrin (SCYL3).